Reading from the N-terminus, the 52-residue chain is Defensin-like protein 2B (52 aa).

4 cysteine pairs are disulfide-bonded: C4–C52, C16–C37, C22–C46, and C26–C48.

In terms of assembly, forms oligomers in its native state.

In terms of biological role, possesses antifungal activity sensitive to inorganic cations. In Sinapis alba (White mustard), this protein is Defensin-like protein 2B.